Here is a 363-residue protein sequence, read N- to C-terminus: rRNA processing protein rcl1 (363 aa).

It belongs to the RNA 3'-terminal cyclase family. Type 2 subfamily. In terms of assembly, interacts directly with bms1 and the U3 snoRNA to form a stable subcomplex. Component of the 90S small subunit processome also known as 90S pre-ribosome that consists of the 35S pre-rRNA, early-associating ribosomal proteins most of which are part of the small ribosomal subunit, the U3 snoRNA and associated proteins.

Its subcellular location is the nucleus. The protein localises to the nucleolus. Its function is as follows. Does not have cyclase activity. Plays a role in 40S-ribosomal-subunit biogenesis in the early pre-rRNA processing steps at sites A0, A1 and A2 that are required for proper maturation of the 18S RNA. Rcl1 activates bms1 by promoting GDP/GTP exchange. This is rRNA processing protein rcl1 (rcl1) from Schizosaccharomyces pombe (strain 972 / ATCC 24843) (Fission yeast).